A 202-amino-acid polypeptide reads, in one-letter code: Glycerol-3-phosphate acyltransferase (202 aa).

4 consecutive transmembrane segments (helical) span residues 2–22, 80–100, 119–139, and 158–178; these read ANLL…AVVV, LNET…LFPV, AIDP…AFFF, and VLMN…VLLI.

The protein belongs to the PlsY family. Probably interacts with PlsX.

The protein localises to the cell inner membrane. The catalysed reaction is an acyl phosphate + sn-glycerol 3-phosphate = a 1-acyl-sn-glycero-3-phosphate + phosphate. The protein operates within lipid metabolism; phospholipid metabolism. In terms of biological role, catalyzes the transfer of an acyl group from acyl-phosphate (acyl-PO(4)) to glycerol-3-phosphate (G3P) to form lysophosphatidic acid (LPA). This enzyme utilizes acyl-phosphate as fatty acyl donor, but not acyl-CoA or acyl-ACP. The chain is Glycerol-3-phosphate acyltransferase from Cupriavidus necator (strain ATCC 17699 / DSM 428 / KCTC 22496 / NCIMB 10442 / H16 / Stanier 337) (Ralstonia eutropha).